We begin with the raw amino-acid sequence, 330 residues long: ADP-L-glycero-D-manno-heptose-6-epimerase (330 aa).

NADP(+) contacts are provided by residues 11–12, 32–33, Lys-39, Lys-54, 75–79, and Asn-92; these read FI, DN, and EGACS. The active-site Proton acceptor is Tyr-139. Lys-143 is a binding site for NADP(+). Asn-168 contributes to the substrate binding site. Residues Val-169 and Lys-177 each contribute to the NADP(+) site. Lys-177 functions as the Proton acceptor in the catalytic mechanism. Substrate-binding positions include Arg-179, His-186, 200-203, Arg-213, and Tyr-292; that span reads FGEY.

Belongs to the NAD(P)-dependent epimerase/dehydratase family. HldD subfamily. Homopentamer. It depends on NADP(+) as a cofactor.

It carries out the reaction ADP-D-glycero-beta-D-manno-heptose = ADP-L-glycero-beta-D-manno-heptose. The protein operates within nucleotide-sugar biosynthesis; ADP-L-glycero-beta-D-manno-heptose biosynthesis; ADP-L-glycero-beta-D-manno-heptose from D-glycero-beta-D-manno-heptose 7-phosphate: step 4/4. In terms of biological role, catalyzes the interconversion between ADP-D-glycero-beta-D-manno-heptose and ADP-L-glycero-beta-D-manno-heptose via an epimerization at carbon 6 of the heptose. In Burkholderia pseudomallei (strain 1026b), this protein is ADP-L-glycero-D-manno-heptose-6-epimerase.